Reading from the N-terminus, the 384-residue chain is S-adenosylmethionine synthase (384 aa).

An ATP-binding site is contributed by His-15. Asp-17 contacts Mg(2+). Glu-43 contacts K(+). L-methionine-binding residues include Glu-56 and Gln-99. The segment at 99–109 (QSPDINQGVDR) is flexible loop. ATP contacts are provided by residues 164–166 (DAK), 230–231 (RF), Asp-239, 245–246 (RK), Ala-262, and Lys-266. Asp-239 is an L-methionine binding site. Lys-270 contacts L-methionine.

This sequence belongs to the AdoMet synthase family. As to quaternary structure, homotetramer; dimer of dimers. Requires Mg(2+) as cofactor. K(+) serves as cofactor.

It is found in the cytoplasm. The catalysed reaction is L-methionine + ATP + H2O = S-adenosyl-L-methionine + phosphate + diphosphate. It functions in the pathway amino-acid biosynthesis; S-adenosyl-L-methionine biosynthesis; S-adenosyl-L-methionine from L-methionine: step 1/1. Its function is as follows. Catalyzes the formation of S-adenosylmethionine (AdoMet) from methionine and ATP. The overall synthetic reaction is composed of two sequential steps, AdoMet formation and the subsequent tripolyphosphate hydrolysis which occurs prior to release of AdoMet from the enzyme. The sequence is that of S-adenosylmethionine synthase from Shigella boydii serotype 18 (strain CDC 3083-94 / BS512).